Reading from the N-terminus, the 436-residue chain is Glutamyl-tRNA reductase (436 aa).

Substrate-binding positions include 56–59 (TCNR), S114, 119–121 (EAQ), and Q125. Residue C57 is the Nucleophile of the active site. 194-199 (GAGEMI) lines the NADP(+) pocket.

The protein belongs to the glutamyl-tRNA reductase family. As to quaternary structure, homodimer.

It carries out the reaction (S)-4-amino-5-oxopentanoate + tRNA(Glu) + NADP(+) = L-glutamyl-tRNA(Glu) + NADPH + H(+). The protein operates within porphyrin-containing compound metabolism; protoporphyrin-IX biosynthesis; 5-aminolevulinate from L-glutamyl-tRNA(Glu): step 1/2. Catalyzes the NADPH-dependent reduction of glutamyl-tRNA(Glu) to glutamate 1-semialdehyde (GSA). This Acidovorax sp. (strain JS42) protein is Glutamyl-tRNA reductase.